A 388-amino-acid polypeptide reads, in one-letter code: Ovalbumin-related protein Y (388 aa).

Cysteines 74 and 121 form a disulfide. 4 N-linked (GlcNAc...) asparagine glycosylation sites follow: Asn-95, Asn-215, Asn-293, and Asn-312.

This sequence belongs to the serpin family. Ov-serpin subfamily. Post-translationally, N-glycosylated on at least two Asn residues by ovomucoid type carbohydrate units. In terms of processing, the N-terminus is blocked. In terms of tissue distribution, major protein of egg white. Expressed in the magnum of the oviduct (at protein level).

The protein resides in the secreted. The polypeptide is Ovalbumin-related protein Y (SERPINB14B) (Gallus gallus (Chicken)).